The chain runs to 170 residues: Acetyl-CoA decarbonylase/synthase complex subunit epsilon 2 (170 aa).

It belongs to the CdhB family. As to quaternary structure, heterotetramer of two alpha and two epsilon subunits. The ACDS complex is made up of alpha, epsilon, beta, gamma and delta subunits with a probable stoichiometry of (alpha(2)epsilon(2))(4)-beta(8)-(gamma(1)delta(1))(8).

The protein operates within one-carbon metabolism; methanogenesis from acetate. Its function is as follows. Part of a complex that catalyzes the reversible cleavage of acetyl-CoA, allowing growth on acetate as sole source of carbon and energy. The alpha-epsilon subcomponent functions as a carbon monoxide dehydrogenase. The precise role of the epsilon subunit is unclear; it may have a stabilizing role within the alpha(2)epsilon(2) component and/or be involved in electron transfer to FAD during a potential FAD-mediated CO oxidation. The protein is Acetyl-CoA decarbonylase/synthase complex subunit epsilon 2 (cdhB2) of Methanosarcina thermophila.